Here is a 297-residue protein sequence, read N- to C-terminus: tRNA pseudouridine synthase B (297 aa).

The Nucleophile role is filled by aspartate 44.

This sequence belongs to the pseudouridine synthase TruB family. Type 1 subfamily.

The enzyme catalyses uridine(55) in tRNA = pseudouridine(55) in tRNA. In terms of biological role, responsible for synthesis of pseudouridine from uracil-55 in the psi GC loop of transfer RNAs. This chain is tRNA pseudouridine synthase B, found in Corynebacterium efficiens (strain DSM 44549 / YS-314 / AJ 12310 / JCM 11189 / NBRC 100395).